We begin with the raw amino-acid sequence, 109 residues long: uncharacterized protein (109 aa).

The interval Asn36–Lys109 is disordered. Positions Asn39–Asn88 are enriched in low complexity. Residues Gln99–Lys109 show a composition bias toward basic residues.

This is an uncharacterized protein from Dictyostelium discoideum (Social amoeba).